The primary structure comprises 345 residues: Gibberellin 2-beta-dioxygenase 2 (345 aa).

The Fe2OG dioxygenase domain occupies 170–285; the sequence is HSDSLLRINH…RMSMMYFAAP (116 aa). Fe cation contacts are provided by His209, Asp211, and His266. Arg276 is a catalytic residue.

Belongs to the iron/ascorbate-dependent oxidoreductase family. GA2OX subfamily. It depends on Fe cation as a cofactor. Predominantly expressed in leaves.

The enzyme catalyses gibberellin A1 + 2-oxoglutarate + O2 = gibberellin A8 + succinate + CO2. Its pathway is plant hormone biosynthesis; gibberellin biosynthesis. Catalyzes the 2-beta-hydroxylation of several biologically active gibberellins, leading to the homeostatic regulation of their endogenous level. Catabolism of gibberellins (GAs) plays a central role in plant development. Converts GA9/GA20 to GA51/GA29 and GA4/GA1 to GA34/GA8. The sequence is that of Gibberellin 2-beta-dioxygenase 2 (GA2OX2) from Pisum sativum (Garden pea).